Consider the following 243-residue polypeptide: 6-carboxyhexanoate--CoA ligase (243 aa).

It belongs to the BioW family. As to quaternary structure, homodimer. Mg(2+) is required as a cofactor.

It carries out the reaction heptanedioate + ATP + CoA = 6-carboxyhexanoyl-CoA + AMP + diphosphate. It functions in the pathway metabolic intermediate metabolism; pimeloyl-CoA biosynthesis; pimeloyl-CoA from pimelate: step 1/1. Catalyzes the transformation of pimelate into pimeloyl-CoA with concomitant hydrolysis of ATP to AMP. The sequence is that of 6-carboxyhexanoate--CoA ligase from Thermocrinis albus (strain DSM 14484 / JCM 11386 / HI 11/12).